The primary structure comprises 290 residues: Acetylglutamate kinase (290 aa).

Substrate is bound by residues 65–66, Arg-87, and Asn-186; that span reads GG.

Belongs to the acetylglutamate kinase family. ArgB subfamily.

The protein resides in the cytoplasm. The enzyme catalyses N-acetyl-L-glutamate + ATP = N-acetyl-L-glutamyl 5-phosphate + ADP. It participates in amino-acid biosynthesis; L-arginine biosynthesis; N(2)-acetyl-L-ornithine from L-glutamate: step 2/4. In terms of biological role, catalyzes the ATP-dependent phosphorylation of N-acetyl-L-glutamate. In Mycobacterium sp. (strain JLS), this protein is Acetylglutamate kinase.